The primary structure comprises 116 residues: Large ribosomal subunit protein bL17 (116 aa).

This sequence belongs to the bacterial ribosomal protein bL17 family. In terms of assembly, part of the 50S ribosomal subunit. Contacts protein L32.

This chain is Large ribosomal subunit protein bL17, found in Fusobacterium nucleatum subsp. nucleatum (strain ATCC 25586 / DSM 15643 / BCRC 10681 / CIP 101130 / JCM 8532 / KCTC 2640 / LMG 13131 / VPI 4355).